Here is a 906-residue protein sequence, read N- to C-terminus: MAWPCITRACCIARFWNQLDKADIAVPLVFTKYSEATEHPGAPPQPPAPLQPALAPPSRAVAIETQPAQGESDAVARATGPAPGPSVDRETVAAPGRSGLGLGAASASTSGSGPADSVMRQDYRAWKVQRPEPSCRPRSEYQPSDAPFERETQYQKDFRAWPLPRRGDHPWIPKPVQIPATSQPSQPVLGVPKRRPQSQERGPMQLSADARDPEGAGGAGVLAAGKASGVDQRDTRRKAGPAWMVTRNEGHEEKPLPPAQSQTQEGGPAAGKASGADQRDTRRKAGPAWMVTRSEGHEEKPLPPAQSQTQEGGPAAGKASGADQRDTRRKAGPAWMVTRTEGHEETPLPPAQSQTQEGGPAAGKASGADERDTRRKAGPAWMVRRSEGHEQTPAAHAQGTGPEGGKGRAVADALNRQIREEVASTVSSSYRNEFRAWTDIKPVKPIKAKPQYKPPDDKMVHETSYSAQFKGEANKPSAADNKAMDRRRIRSLYSEPFKECPKVEKPSVQSSKPKKTSTSHKPPRKAKDKQVVSGQAAKKKTTEGPSATKPDDKEQSKEMNNKLAEAKESRVKPTSDASKNRGPVTKEPHKDQGSVAPGLPKGQEPLKDQGPVVPGLPKDQVPVVPGSLKGQSPTAPGPTKDQGAVLLGPVKDLGPVAPAPIKVQDHIASELLKNKDSVPLAPAKAQSPLLPEPLKNQSPVVPASTKDQSFPTPAPRKDPGPVIPEPEKDRAPTVPERRKDQHVSIMASLKNEAPMVPESVKNQGLAGPELVKDTGTDTTAPRYLKGHDSVFVAPVKNQGPVIPEPVKSQDPIIPALAKDQGPMLPEPPKNQSPVVLGPIKNQDPIIPVPLKGQDPLVPAPTKDQGPTAPDPLKTQGPKGTQLPTVSPSPPVMIPTVPHTEYIEGSP.

The tract at residues M1–F15 is calmodulin-binding. S-palmitoyl cysteine attachment occurs at residues C5, C10, and C11. Disordered regions lie at residues T37 to P56, T65 to A411, K441 to K651, N674 to R782, and A817 to P906. Pro residues predominate over residues G41–L50. Positions A93–S117 are enriched in low complexity. A Phosphoserine modification is found at S98. The tract at residues D116–S139 is mn 1. Residues M119–S139 show a composition bias toward basic and acidic residues. The calmodulin-binding stretch occupies residues R124–R138. Phosphotyrosine is present on Y141. Residues P147–W171 show a composition bias toward basic and acidic residues. Positions E151–K174 are mn 2. The tract at residues A160–K174 is calmodulin-binding. S185 is modified (phosphoserine). The interval P187–R201 is calmodulin-binding. S207 is modified (phosphoserine). The Mc-1 repeat unit spans residues L222 to G267. A 4 X approximate tandem repeat Mc region spans residues L222–G405. Calmodulin-binding regions lie at residues T235–E249, D280–S294, R325–R339, R375–H389, R435–K449, R486–C500, and P513–K527. The stretch at P268–G313 is one Mc-2 repeat. One copy of the Mc-3 repeat lies at P314–G359. The stretch at P360 to G405 is one Mc-4 repeat. Residues S427–P450 form a mn 3 region. Basic and acidic residues predominate over residues P496 to K505. A compositionally biased stretch (basic residues) spans K512–K527. The segment covering K549–P573 has biased composition (basic and acidic residues). Phosphoserine occurs at positions 632 and 687. Positions K695–P711 are enriched in polar residues. Residues P715 to H742 are compositionally biased toward basic and acidic residues. Residue S905 is modified to Phosphoserine.

The protein belongs to the STOP family. In terms of assembly, interacts with calmodulin (via C-terminus); the interaction is dependent on Ca(2+). Interacts (via C-terminus) with TMEM106B (via N-terminus). Interacts with ZDHHC13 (via ANK repeats). Interacts with ZDHHC17 (via ANK repeats). In terms of processing, palmitoylated. Probably depalmitoylated by ABHD17A, ABHD17B and ABHD17C. During neuronal polarization, palmitoylation and depalmitoylation cycles regulate MAP6 shuttling between secretory vesicles and microtubules, and its polarized distribution in the axon. Isoform 1 is specifically expressed in adult brain. Isoform 2 is predominantly expressed in embryonic brain; expression persists at low levels in the adult brain. Isoform 3 is expressed at high levels in lung and at lower levels in testis, heart, muscle and kidney (at protein level). Oligodendrocytes express a major isoform of 89 kDa (O-STOP). Astrocytes also express an isoform of 60 kDa (A-STOP).

Its subcellular location is the cytoplasm. The protein resides in the cytoskeleton. It localises to the golgi apparatus. The protein localises to the cell projection. It is found in the axon. Its subcellular location is the dendrite. The protein resides in the cytoplasmic vesicle. It localises to the secretory vesicle membrane. Functionally, involved in microtubule stabilization in many cell types, including neuronal cells. Specifically has microtubule cold stabilizing activity. Involved in dendrite morphogenesis and maintenance by regulating lysosomal trafficking via its interaction with TMEM106B. Regulates KIF5A-mediated axonal cargo transport. Regulates axonal growth during neuron polarization. This is Microtubule-associated protein 6 (Map6) from Mus musculus (Mouse).